Reading from the N-terminus, the 332-residue chain is Glycerol-3-phosphate dehydrogenase [NAD(P)+] (332 aa).

The NADPH site is built by W13, K34, and K108. 3 residues coordinate sn-glycerol 3-phosphate: K108, G136, and S138. An NADPH-binding site is contributed by A140. Sn-glycerol 3-phosphate contacts are provided by K191, D244, S254, R255, and N256. K191 functions as the Proton acceptor in the catalytic mechanism. R255 serves as a coordination point for NADPH. The NADPH site is built by V279 and E281.

This sequence belongs to the NAD-dependent glycerol-3-phosphate dehydrogenase family.

The protein resides in the cytoplasm. The catalysed reaction is sn-glycerol 3-phosphate + NAD(+) = dihydroxyacetone phosphate + NADH + H(+). It carries out the reaction sn-glycerol 3-phosphate + NADP(+) = dihydroxyacetone phosphate + NADPH + H(+). Its pathway is membrane lipid metabolism; glycerophospholipid metabolism. Its function is as follows. Catalyzes the reduction of the glycolytic intermediate dihydroxyacetone phosphate (DHAP) to sn-glycerol 3-phosphate (G3P), the key precursor for phospholipid synthesis. This chain is Glycerol-3-phosphate dehydrogenase [NAD(P)+], found in Francisella tularensis subsp. mediasiatica (strain FSC147).